Here is a 188-residue protein sequence, read N- to C-terminus: Putative 3-methyladenine DNA glycosylase (188 aa).

Belongs to the DNA glycosylase MPG family.

The protein is Putative 3-methyladenine DNA glycosylase of Ehrlichia ruminantium (Cowdria ruminantium).